Here is a 67-residue protein sequence, read N- to C-terminus: Large ribosomal subunit protein bL35 (67 aa).

The protein belongs to the bacterial ribosomal protein bL35 family.

This is Large ribosomal subunit protein bL35 from Sinorhizobium fredii (strain NBRC 101917 / NGR234).